Consider the following 561-residue polypeptide: Type 2 DNA topoisomerase 6 subunit B (561 aa).

Residues N46, D78, 99–100 (TK), 109–116 (GQQGIGIS), and K471 each bind ATP.

The protein belongs to the TOP6B family. Homodimer. Heterotetramer of two Top6A and two Top6B chains.

The catalysed reaction is ATP-dependent breakage, passage and rejoining of double-stranded DNA.. Relaxes both positive and negative superturns and exhibits a strong decatenase activity. The protein is Type 2 DNA topoisomerase 6 subunit B of Thermococcus gammatolerans (strain DSM 15229 / JCM 11827 / EJ3).